The chain runs to 279 residues: Putative polysaccharide deacetylase YxkH (279 aa).

The signal sequence occupies residues 1–19 (MKRLFLSIFLLGSCLALAA). Cys20 carries N-palmitoyl cysteine lipidation. A lipid anchor (S-diacylglycerol cysteine) is attached at Cys20. Residues 29–51 (QPMPKAEQKKPEKKAVQVQKKED) are disordered. Residues 34–51 (AEQKKPEKKAVQVQKKED) are compositionally biased toward basic and acidic residues. The NodB homology domain maps to 119-279 (KCVLITFDDG…AFGAYIESMK (161 aa)).

It belongs to the polysaccharide deacetylase family.

It is found in the cell membrane. The protein is Putative polysaccharide deacetylase YxkH (yxkH) of Bacillus subtilis (strain 168).